The primary structure comprises 61 residues: Small ribosomal subunit protein uS14B (61 aa).

C24, C27, C40, and C43 together coordinate Zn(2+).

The protein belongs to the universal ribosomal protein uS14 family. Zinc-binding uS14 subfamily. In terms of assembly, part of the 30S ribosomal subunit. Contacts proteins S3 and S10. Requires Zn(2+) as cofactor.

Functionally, binds 16S rRNA, required for the assembly of 30S particles and may also be responsible for determining the conformation of the 16S rRNA at the A site. The protein is Small ribosomal subunit protein uS14B of Streptococcus agalactiae serotype Ia (strain ATCC 27591 / A909 / CDC SS700).